Consider the following 354-residue polypeptide: Uroporphyrinogen decarboxylase (354 aa).

Residues 30–34, aspartate 79, tyrosine 154, serine 209, and histidine 333 contribute to the substrate site; that span reads RQAGR.

It belongs to the uroporphyrinogen decarboxylase family. Homodimer.

Its subcellular location is the cytoplasm. It catalyses the reaction uroporphyrinogen III + 4 H(+) = coproporphyrinogen III + 4 CO2. It participates in porphyrin-containing compound metabolism; protoporphyrin-IX biosynthesis; coproporphyrinogen-III from 5-aminolevulinate: step 4/4. Functionally, catalyzes the decarboxylation of four acetate groups of uroporphyrinogen-III to yield coproporphyrinogen-III. This chain is Uroporphyrinogen decarboxylase, found in Mycolicibacterium vanbaalenii (strain DSM 7251 / JCM 13017 / BCRC 16820 / KCTC 9966 / NRRL B-24157 / PYR-1) (Mycobacterium vanbaalenii).